The primary structure comprises 211 residues: 5-formyltetrahydrofolate cyclo-ligase (211 aa).

4–8 (KQLLR) contacts ATP. Substrate contacts are provided by residues Glu56 and 152 to 156 (HGAGY). ATP contacts are provided by residues 151 to 158 (GHGAGYYD) and Asp194.

This sequence belongs to the 5-formyltetrahydrofolate cyclo-ligase family. Post-translationally, N-glycosylated.

It is found in the mitochondrion. The catalysed reaction is (6S)-5-formyl-5,6,7,8-tetrahydrofolate + ATP = (6R)-5,10-methenyltetrahydrofolate + ADP + phosphate. Its function is as follows. Only enzyme known to utilize 5-formyltetrahydrofolate (folinic acid) as substrate. Contributes to tetrahydrofolate metabolism in an alternative way of folate biosynthesis. May regulate carbon flow through the folate-dependent one-carbon metabolic network that supplies carbon for the biosynthesis of purines, thymidine and amino acids. The protein is 5-formyltetrahydrofolate cyclo-ligase (FAU1) of Saccharomyces cerevisiae (strain ATCC 204508 / S288c) (Baker's yeast).